We begin with the raw amino-acid sequence, 280 residues long: Bifunctional protein FolD (280 aa).

NADP(+) contacts are provided by residues 158 to 160 (GES), I183, and I222.

It belongs to the tetrahydrofolate dehydrogenase/cyclohydrolase family. As to quaternary structure, homodimer.

It catalyses the reaction (6R)-5,10-methylene-5,6,7,8-tetrahydrofolate + NADP(+) = (6R)-5,10-methenyltetrahydrofolate + NADPH. It carries out the reaction (6R)-5,10-methenyltetrahydrofolate + H2O = (6R)-10-formyltetrahydrofolate + H(+). The protein operates within one-carbon metabolism; tetrahydrofolate interconversion. Catalyzes the oxidation of 5,10-methylenetetrahydrofolate to 5,10-methenyltetrahydrofolate and then the hydrolysis of 5,10-methenyltetrahydrofolate to 10-formyltetrahydrofolate. In Mycoplasma mobile (strain ATCC 43663 / 163K / NCTC 11711) (Mesomycoplasma mobile), this protein is Bifunctional protein FolD.